The primary structure comprises 89 residues: MKNRSAIKRHNQSEVRRMRNRSAKSEVRTTARKYTEAVHAANAENAAALLRELSSQLDSAARKGILTKNSAARKKSRMQLLYNASFAAK.

Over residues 1-10 the composition is skewed to basic residues; the sequence is MKNRSAIKRH. A disordered region spans residues 1–30; sequence MKNRSAIKRHNQSEVRRMRNRSAKSEVRTT. A compositionally biased stretch (basic and acidic residues) spans 11–30; that stretch reads NQSEVRRMRNRSAKSEVRTT.

It belongs to the bacterial ribosomal protein bS20 family.

Functionally, binds directly to 16S ribosomal RNA. In Treponema denticola (strain ATCC 35405 / DSM 14222 / CIP 103919 / JCM 8153 / KCTC 15104), this protein is Small ribosomal subunit protein bS20.